The sequence spans 365 residues: Peptide chain release factor 2 (365 aa).

Position 252 is an N5-methylglutamine (Gln-252).

It belongs to the prokaryotic/mitochondrial release factor family. In terms of processing, methylated by PrmC. Methylation increases the termination efficiency of RF2.

It is found in the cytoplasm. Peptide chain release factor 2 directs the termination of translation in response to the peptide chain termination codons UGA and UAA. This chain is Peptide chain release factor 2, found in Tolumonas auensis (strain DSM 9187 / NBRC 110442 / TA 4).